The following is a 405-amino-acid chain: Probable tRNA sulfurtransferase (405 aa).

Residues 60–165 (DQVMARLSQV…REAIYLSTKT (106 aa)) enclose the THUMP domain. ATP contacts are provided by residues 183 to 184 (ML), 208 to 209 (HF), R265, G287, and Q296.

This sequence belongs to the ThiI family.

Its subcellular location is the cytoplasm. It carries out the reaction [ThiI sulfur-carrier protein]-S-sulfanyl-L-cysteine + a uridine in tRNA + 2 reduced [2Fe-2S]-[ferredoxin] + ATP + H(+) = [ThiI sulfur-carrier protein]-L-cysteine + a 4-thiouridine in tRNA + 2 oxidized [2Fe-2S]-[ferredoxin] + AMP + diphosphate. It catalyses the reaction [ThiS sulfur-carrier protein]-C-terminal Gly-Gly-AMP + S-sulfanyl-L-cysteinyl-[cysteine desulfurase] + AH2 = [ThiS sulfur-carrier protein]-C-terminal-Gly-aminoethanethioate + L-cysteinyl-[cysteine desulfurase] + A + AMP + 2 H(+). Its pathway is cofactor biosynthesis; thiamine diphosphate biosynthesis. In terms of biological role, catalyzes the ATP-dependent transfer of a sulfur to tRNA to produce 4-thiouridine in position 8 of tRNAs, which functions as a near-UV photosensor. Also catalyzes the transfer of sulfur to the sulfur carrier protein ThiS, forming ThiS-thiocarboxylate. This is a step in the synthesis of thiazole, in the thiamine biosynthesis pathway. The sulfur is donated as persulfide by IscS. In Lacticaseibacillus casei (strain BL23) (Lactobacillus casei), this protein is Probable tRNA sulfurtransferase.